Consider the following 408-residue polypeptide: Branched-chain amino acid aminotransferase 2, chloroplastic (408 aa).

The transit peptide at 1–58 (MDCAAALLPGFHPNYLLCPSRHFSSLLPKTDLSSPLKFQLQNKQLSLASSHGFSPVIC) directs the protein to the chloroplast. Arg-152 is a pyridoxal 5'-phosphate binding site. The active-site Proton acceptor is Lys-254. At Lys-254 the chain carries N6-(pyridoxal phosphate)lysine. Glu-290 provides a ligand contact to pyridoxal 5'-phosphate.

This sequence belongs to the class-IV pyridoxal-phosphate-dependent aminotransferase family. Pyridoxal 5'-phosphate serves as cofactor. As to expression, expressed in lupulin glands and leaves.

The protein resides in the plastid. The protein localises to the chloroplast. It catalyses the reaction L-isoleucine + 2-oxoglutarate = (S)-3-methyl-2-oxopentanoate + L-glutamate. The enzyme catalyses L-leucine + 2-oxoglutarate = 4-methyl-2-oxopentanoate + L-glutamate. The catalysed reaction is L-valine + 2-oxoglutarate = 3-methyl-2-oxobutanoate + L-glutamate. It functions in the pathway amino-acid biosynthesis; L-isoleucine biosynthesis; L-isoleucine from 2-oxobutanoate: step 4/4. The protein operates within amino-acid biosynthesis; L-leucine biosynthesis; L-leucine from 3-methyl-2-oxobutanoate: step 4/4. It participates in amino-acid biosynthesis; L-valine biosynthesis; L-valine from pyruvate: step 4/4. Its function is as follows. Converts 2-oxo acids to branched-chain amino acids. Shows no kinetic preferences corresponding to anabolic or catabolic functions, but likely involved in BCAA biosynthesis. This is Branched-chain amino acid aminotransferase 2, chloroplastic from Humulus lupulus (European hop).